The following is a 229-amino-acid chain: Demethylmenaquinone methyltransferase (229 aa).

Residues threonine 57, aspartate 77, and 101-102 (DV) contribute to the S-adenosyl-L-methionine site.

Belongs to the class I-like SAM-binding methyltransferase superfamily. MenG/UbiE family.

The catalysed reaction is a 2-demethylmenaquinol + S-adenosyl-L-methionine = a menaquinol + S-adenosyl-L-homocysteine + H(+). Its pathway is quinol/quinone metabolism; menaquinone biosynthesis; menaquinol from 1,4-dihydroxy-2-naphthoate: step 2/2. Functionally, methyltransferase required for the conversion of demethylmenaquinol (DMKH2) to menaquinol (MKH2). This is Demethylmenaquinone methyltransferase from Chlamydia trachomatis serovar A (strain ATCC VR-571B / DSM 19440 / HAR-13).